The primary structure comprises 800 residues: Receptor-like protein 47 (800 aa).

The N-terminal stretch at 1–31 (MMHSSSVRRMITVKWSLCLIFCLTNSILVSA) is a signal peptide. Over 32–759 (KHLCLPDQKD…QDEDKEEEDQ (728 aa)) the chain is Extracellular. Residues asparagine 66 and asparagine 102 are each glycosylated (N-linked (GlcNAc...) asparagine). 23 LRR repeats span residues 109 to 131 (QHLQKLVLGSNHLSGILPDSIGN), 133 to 156 (KRLKVLVLVNCNLFGKIPSSLGNL), 157 to 179 (SYLTHLDLSYNDFTSEGPDSMGN), 190 to 213 (LSSVTWIDLGDNQLKGMLPSNMSS), 214 to 238 (LSKLEAFDISGNSFSGTIPSSLFMI), 240 to 262 (SLILLHLGRNDFSGPFEIGNISS), 263 to 288 (PSNLQLLNIGRNNFNPDIVDLSIFSP), 294 to 311 (YLDVSGINLKISSTVSLP), 312 to 334 (SPIEYLGLLSCNISEFPKFLRNQ), 335 to 358 (TSLEYLDISANQIEGQVPEWLWSL), 360 to 383 (ELRYVNISHNSFNGFEGPADVIQG), 385 to 406 (RELLVLDISSNIFQDPFPLLPV), 407 to 430 (VSMNYLFSSNNRFSGEIPKTICEL), 431 to 453 (DNLRILVLSNNNFSGSIPRCFEN), 455 to 477 (HLYVLHLRNNNLSGIFPEEAISH), 479 to 500 (LQSFDVGHNLFSGELPKSLINC), 502 to 523 (DIEFLNVEDNRINDTFPSWLEL), 524 to 550 (LPNLQILVLRSNEFYGPIFSPGDSLSF), 551 to 574 (SRLRIFDISENRFTGVLPSDYFVG), 621 to 645 (FTIYKTIDVSGNRLEGDIPESIGLL), 646 to 669 (KEVIVLSMSNNAFTGHIPPSLSNL), 670 to 693 (SNLQSLDLSQNRLSGSIPGELGKL), and 695 to 718 (FLEWMNFSHNRLEGPIPETTQIQT). The N-linked (GlcNAc...) asparagine glycan is linked to asparagine 155. A glycan (N-linked (GlcNAc...) asparagine) is linked at asparagine 210. Asparagine 259 carries N-linked (GlcNAc...) asparagine glycosylation. Asparagine 323 and asparagine 333 each carry an N-linked (GlcNAc...) asparagine glycan. A glycan (N-linked (GlcNAc...) asparagine) is linked at asparagine 365. 4 N-linked (GlcNAc...) asparagine glycosylation sites follow: asparagine 442, asparagine 465, asparagine 499, and asparagine 514. Asparagine 668 is a glycosylation site (N-linked (GlcNAc...) asparagine). Asparagine 700 is a glycosylation site (N-linked (GlcNAc...) asparagine). Residues 760 to 780 (VFSWIAAAIGYVPGVVCGLTI) traverse the membrane as a helical segment. Topologically, residues 781 to 800 (GHILVSHKRDWFMRIVSFFT) are cytoplasmic.

The protein belongs to the RLP family.

The protein localises to the cell membrane. This chain is Receptor-like protein 47, found in Arabidopsis thaliana (Mouse-ear cress).